A 174-amino-acid chain; its full sequence is uncharacterized protein (174 aa).

The tract at residues 78 to 97 (TFGRNIKTPDISNPTRARNE) is disordered.

It to yeast YMR295c.

This is an uncharacterized protein from Saccharomyces cerevisiae (strain ATCC 204508 / S288c) (Baker's yeast).